A 210-amino-acid chain; its full sequence is Orotate phosphoribosyltransferase (210 aa).

Residues Arg96, Lys100, His102, and 122-130 (DDLISTGGS) each bind 5-phospho-alpha-D-ribose 1-diphosphate. Ser126 lines the orotate pocket.

The protein belongs to the purine/pyrimidine phosphoribosyltransferase family. PyrE subfamily. As to quaternary structure, homodimer. Mg(2+) is required as a cofactor.

The catalysed reaction is orotidine 5'-phosphate + diphosphate = orotate + 5-phospho-alpha-D-ribose 1-diphosphate. The protein operates within pyrimidine metabolism; UMP biosynthesis via de novo pathway; UMP from orotate: step 1/2. In terms of biological role, catalyzes the transfer of a ribosyl phosphate group from 5-phosphoribose 1-diphosphate to orotate, leading to the formation of orotidine monophosphate (OMP). The sequence is that of Orotate phosphoribosyltransferase from Levilactobacillus brevis (strain ATCC 367 / BCRC 12310 / CIP 105137 / JCM 1170 / LMG 11437 / NCIMB 947 / NCTC 947) (Lactobacillus brevis).